A 225-amino-acid polypeptide reads, in one-letter code: Ribonuclease 3 (225 aa).

Residues 4 to 133 (FEKLEKLLGY…LIAAIYLDSN (130 aa)) form the RNase III domain. Mg(2+) is bound at residue Glu46. Asp50 is an active-site residue. Mg(2+) contacts are provided by Asn119 and Glu122. Residue Glu122 is part of the active site. A DRBM domain is found at 158–225 (DPKTALQEWA…AARKLLHKLK (68 aa)).

Belongs to the ribonuclease III family. Homodimer. Mg(2+) serves as cofactor.

The protein localises to the cytoplasm. It catalyses the reaction Endonucleolytic cleavage to 5'-phosphomonoester.. In terms of biological role, digests double-stranded RNA. Involved in the processing of primary rRNA transcript to yield the immediate precursors to the large and small rRNAs (23S and 16S). Processes some mRNAs, and tRNAs when they are encoded in the rRNA operon. Processes pre-crRNA and tracrRNA of type II CRISPR loci if present in the organism. This Rickettsia felis (strain ATCC VR-1525 / URRWXCal2) (Rickettsia azadi) protein is Ribonuclease 3.